The sequence spans 129 residues: M-zodatoxin-Lt8g (129 aa).

The first 20 residues, 1–20 (MKYFVVALALVAAFACIAES), serve as a signal peptide directing secretion. Positions 21-60 (KPAESEHELAEVEEENELADLEDAVWLEHLADLSDLEEAR) are excised as a propeptide. The Processing quadruplet motif motif lies at 57–60 (EEAR).

Cleavage of the propeptide depends on the processing quadruplet motif (XXXR, with at least one of X being E). In terms of tissue distribution, expressed by the venom gland.

Its subcellular location is the secreted. In terms of biological role, insecticidal, cytolytic and antimicrobial peptide. Has insecticidal activity against the flesh fly S.carnaria. Has antibacterial activity against the Gram-negative bacteria E.coli. Forms voltage-dependent, ion-permeable channels in membranes. At high concentration causes cell membrane lysis. The polypeptide is M-zodatoxin-Lt8g (cit 1-8) (Lachesana tarabaevi (Spider)).